We begin with the raw amino-acid sequence, 356 residues long: Guanine nucleotide-binding protein alpha-17 subunit (356 aa).

The N-myristoyl glycine moiety is linked to residue Gly2. A lipid anchor (S-palmitoyl cysteine) is attached at Cys4. A G-alpha domain is found at 32–356; that stretch reads SIVKLLLLGA…QKNLQKAGMM (325 aa). The G1 motif stretch occupies residues 35–48; sequence KLLLLGAGECGKST. Residues 40–47, 177–183, 202–206, 271–274, and Ala328 each bind GTP; these read GAGECGKS, LYSRVAT, DVGGQ, and NKKD. Mg(2+) is bound by residues Ser47 and Thr183. The G2 motif stretch occupies residues 175–183; the sequence is DILYSRVAT. A G3 motif region spans residues 198–207; sequence FRVFDVGGQR. Residues 267-274 form a G4 motif region; sequence ILFMNKKD. The tract at residues 326–331 is G5 motif; that stretch reads TCATDT.

It belongs to the G-alpha family. G proteins are composed of 3 units; alpha, beta and gamma. The alpha chain contains the guanine nucleotide binding site.

It localises to the cell projection. The protein resides in the cilium. It is found in the dendrite. Guanine nucleotide-binding proteins (G proteins) are involved as modulators or transducers in various transmembrane signaling systems. This specific G-alpha subunit plays an important role in olfaction and in cilia morphogenesis. Involved in chemotactic responses to attractants diacetyl, pyrazine, 2,4,5-trimethylthiazole, benzaldehyde, isoamyl alcohol, butanone and 2,3-pentanedione. Displays a redundant function with gpa-3 in chemotactic responses. Involved in avoidance responses to copper, sodium dodecyl sulfate and linoleic acid. Involved in osmotic avoidance and mechanosensory responses. Involved in specifying fan-like morphology of cilia of head sensory neurons AWC. The sequence is that of Guanine nucleotide-binding protein alpha-17 subunit (odr-3) from Caenorhabditis briggsae.